The following is a 240-amino-acid chain: Pyridoxine 5'-phosphate synthase (240 aa).

Asn-7 is a 3-amino-2-oxopropyl phosphate binding site. 1-deoxy-D-xylulose 5-phosphate is bound at residue 9–10 (DH). 3-amino-2-oxopropyl phosphate is bound at residue Arg-18. His-43 acts as the Proton acceptor in catalysis. The 1-deoxy-D-xylulose 5-phosphate site is built by Arg-45 and His-50. The active-site Proton acceptor is Glu-70. Thr-100 is a 1-deoxy-D-xylulose 5-phosphate binding site. His-191 serves as the catalytic Proton donor. 3-amino-2-oxopropyl phosphate is bound by residues Gly-192 and 213–214 (GH).

This sequence belongs to the PNP synthase family. Homooctamer; tetramer of dimers.

The protein resides in the cytoplasm. It catalyses the reaction 3-amino-2-oxopropyl phosphate + 1-deoxy-D-xylulose 5-phosphate = pyridoxine 5'-phosphate + phosphate + 2 H2O + H(+). Its pathway is cofactor biosynthesis; pyridoxine 5'-phosphate biosynthesis; pyridoxine 5'-phosphate from D-erythrose 4-phosphate: step 5/5. Its function is as follows. Catalyzes the complicated ring closure reaction between the two acyclic compounds 1-deoxy-D-xylulose-5-phosphate (DXP) and 3-amino-2-oxopropyl phosphate (1-amino-acetone-3-phosphate or AAP) to form pyridoxine 5'-phosphate (PNP) and inorganic phosphate. This is Pyridoxine 5'-phosphate synthase from Trichodesmium erythraeum (strain IMS101).